Consider the following 150-residue polypeptide: Globin-1 (150 aa).

A Globin domain is found at 11–150 (PLSDAEKNKI…MICILLSSAY (140 aa)). His-74 and His-106 together coordinate heme b.

Belongs to the globin family. In terms of assembly, monomer.

The chain is Globin-1 from Mordacia mordax (Southern hemisphere lamprey).